A 666-amino-acid polypeptide reads, in one-letter code: Zinc finger protein 710 (666 aa).

Residues Lys110 and Lys113 each participate in a glycyl lysine isopeptide (Lys-Gly) (interchain with G-Cter in SUMO2) cross-link. The interval 113–141 (KAEEEEEQEVYEVSVPGDDKDPGPAEAPA) is disordered. C2H2-type zinc fingers lie at residues 297–319 (WQCRMCEKSYTSKYNLVTHILGH), 325–347 (HSCPHCSKLFKQPSHLQTHLLTH), and 353–375 (HKCQVCHKAFTQTSHLKRHMLLH). Residue Lys379 forms a Glycyl lysine isopeptide (Lys-Gly) (interchain with G-Cter in SUMO2) linkage. 8 consecutive C2H2-type zinc fingers follow at residues 381–403 (YSCHFCGRGFAYPSELKAHEVKH), 409–431 (HVCVECGLDFSTLTQLKRHLASH), 437–459 (YQCLECDKSFHYRSQLQNHMLKH), 465–487 (FVCTECGMEFSQIHHLKQHSLTH), 493–515 (FKCEVCGREFTLQANMKRHMLIH), 521–543 (YQCHICFKTFVQKQTLKTHMIVH), 549–571 (FKCKVCGKSFNRMYNLLGHMHLH), and 577–600 (FKCPYCSSKFNLKGNLSRHMKVKH).

The protein belongs to the krueppel C2H2-type zinc-finger protein family.

The protein localises to the nucleus. In terms of biological role, may be involved in transcriptional regulation. This is Zinc finger protein 710 (Znf710) from Mus musculus (Mouse).